The following is a 198-amino-acid chain: Ribonuclease HII (198 aa).

The 189-residue stretch at Q10–S198 folds into the RNase H type-2 domain. Positions 16, 17, and 108 each coordinate a divalent metal cation.

This sequence belongs to the RNase HII family. The cofactor is Mn(2+). Mg(2+) serves as cofactor.

It is found in the cytoplasm. It catalyses the reaction Endonucleolytic cleavage to 5'-phosphomonoester.. Endonuclease that specifically degrades the RNA of RNA-DNA hybrids. The chain is Ribonuclease HII from Shigella dysenteriae serotype 1 (strain Sd197).